Reading from the N-terminus, the 484-residue chain is Acetyl-coenzyme A carboxylase carboxyl transferase subunit beta, chloroplastic (484 aa).

A CoA carboxyltransferase N-terminal domain is found at 223 to 484 (LWIQCDNCYG…LHAFFPLNKN (262 aa)). Zn(2+) is bound by residues Cys-227, Cys-230, Cys-243, and Cys-246. A C4-type zinc finger spans residues 227-246 (CDNCYGLMYKKVKMNVCEQC).

The protein belongs to the AccD/PCCB family. Acetyl-CoA carboxylase is a heterohexamer composed of biotin carboxyl carrier protein, biotin carboxylase and 2 subunits each of ACCase subunit alpha and ACCase plastid-coded subunit beta (accD). The cofactor is Zn(2+).

It is found in the plastid. Its subcellular location is the chloroplast stroma. The catalysed reaction is N(6)-carboxybiotinyl-L-lysyl-[protein] + acetyl-CoA = N(6)-biotinyl-L-lysyl-[protein] + malonyl-CoA. The protein operates within lipid metabolism; malonyl-CoA biosynthesis; malonyl-CoA from acetyl-CoA: step 1/1. Its function is as follows. Component of the acetyl coenzyme A carboxylase (ACC) complex. Biotin carboxylase (BC) catalyzes the carboxylation of biotin on its carrier protein (BCCP) and then the CO(2) group is transferred by the transcarboxylase to acetyl-CoA to form malonyl-CoA. The sequence is that of Acetyl-coenzyme A carboxylase carboxyl transferase subunit beta, chloroplastic from Crucihimalaya wallichii (Rock-cress).